A 1793-amino-acid polypeptide reads, in one-letter code: Transposon Ty1-H Gag-Pol polyprotein (1793 aa).

Composition is skewed to polar residues over residues 1 to 10 (MESQQLSNYP), 48 to 60 (TKAN…TPAS), and 127 to 152 (QSQF…GNTF). Disordered stretches follow at residues 1 to 84 (MESQ…QNGP), 126 to 174 (PQSQ…PPPM), and 390 to 459 (GSRN…SKST). Positions 153–165 (TDSSSADSDMTST) are enriched in low complexity. The interval 337-439 (NNGIHINNKV…NSKSKTARAH (103 aa)) is RNA-binding. Residues 440 to 456 (NVSTSNNSPSTDNDSIS) show a composition bias toward low complexity. Residue Asp499 is the For protease activity; shared with dimeric partner of the active site. The integrase-type zinc finger-like stretch occupies residues 621 to 678 (NVHTSESTRKYPYPFIHRMLAHANAQTIRYSLKNNTITYFNESDVDWSSAIDYQCPDC). Positions 698–873 (NSYEPFQYLH…AGLDISTLLP (176 aa)) constitute an Integrase catalytic domain. Mg(2+)-binding residues include Asp709 and Asp774. Residues 996–1208 (AVSPTDSTPP…SSLGGIGDSN (213 aa)) form a disordered region. Residues 998-1007 (SPTDSTPPST) are compositionally biased toward low complexity. Positions 1043–1053 (STPQISDIEST) are enriched in polar residues. The span at 1076-1091 (ESSHASKSKDFRHSDS) shows a compositional bias: basic and acidic residues. Composition is skewed to polar residues over residues 1092 to 1120 (YSDN…QTSE) and 1133 to 1144 (SIDTSSSESNSL). A Bipartite nuclear localization signal motif is present at residues 1216 to 1250 (KKRSLEDNETEIKVSRDTWNTKNMRSLEPPRSKKR). Residues 1376 to 1514 (NNYYITQLDI…DILGLEIKYQ (139 aa)) enclose the Reverse transcriptase Ty1/copia-type domain. The Mg(2+) site is built by Asp1384, Asp1465, Asp1466, Asp1648, Glu1690, and Asp1723. The RNase H Ty1/copia-type domain maps to 1648–1790 (DASYGNQPYY…IKTFKLLTNK (143 aa)).

The capsid protein forms a homotrimer, from which the VLPs are assembled. The protease is a homodimer, whose active site consists of two apposed aspartic acid residues. Post-translationally, initially, virus-like particles (VLPs) are composed of the structural unprocessed proteins Gag and Gag-Pol, and also contain the host initiator methionine tRNA (tRNA(i)-Met) which serves as a primer for minus-strand DNA synthesis, and a dimer of genomic Ty RNA. Processing of the polyproteins occurs within the particle and proceeds by an ordered pathway, called maturation. First, the protease (PR) is released by autocatalytic cleavage of the Gag-Pol polyprotein yielding capsid protein p45 and a Pol-p154 precursor protein. This cleavage is a prerequisite for subsequent processing of Pol-p154 at the remaining sites to release the mature structural and catalytic proteins. Maturation takes place prior to the RT reaction and is required to produce transposition-competent VLPs.

The protein resides in the cytoplasm. Its subcellular location is the nucleus. It carries out the reaction DNA(n) + a 2'-deoxyribonucleoside 5'-triphosphate = DNA(n+1) + diphosphate. The enzyme catalyses Endonucleolytic cleavage to 5'-phosphomonoester.. In terms of biological role, capsid protein (CA) is the structural component of the virus-like particle (VLP), forming the shell that encapsulates the retrotransposons dimeric RNA genome. The particles are assembled from trimer-clustered units and there are holes in the capsid shells that allow for the diffusion of macromolecules. CA also has nucleocapsid-like chaperone activity, promoting primer tRNA(i)-Met annealing to the multipartite primer-binding site (PBS), dimerization of Ty1 RNA and initiation of reverse transcription. The aspartyl protease (PR) mediates the proteolytic cleavages of the Gag and Gag-Pol polyproteins after assembly of the VLP. Functionally, reverse transcriptase/ribonuclease H (RT) is a multifunctional enzyme that catalyzes the conversion of the retro-elements RNA genome into dsDNA within the VLP. The enzyme displays a DNA polymerase activity that can copy either DNA or RNA templates, and a ribonuclease H (RNase H) activity that cleaves the RNA strand of RNA-DNA heteroduplexes during plus-strand synthesis and hydrolyzes RNA primers. The conversion leads to a linear dsDNA copy of the retrotransposon that includes long terminal repeats (LTRs) at both ends. Its function is as follows. Integrase (IN) targets the VLP to the nucleus, where a subparticle preintegration complex (PIC) containing at least integrase and the newly synthesized dsDNA copy of the retrotransposon must transit the nuclear membrane. Once in the nucleus, integrase performs the integration of the dsDNA into the host genome. The sequence is that of Transposon Ty1-H Gag-Pol polyprotein (TY1B-H) from Saccharomyces cerevisiae (strain ATCC 204508 / S288c) (Baker's yeast).